We begin with the raw amino-acid sequence, 395 residues long: Renin (395 aa).

The N-terminal stretch at 1–21 (MLQSWEFVLLISCFLCFSSDA) is a signal peptide. Residues 22–43 (LQRISLKKMPSIRETLQEMGMK) constitute a propeptide, activation peptide. An N-linked (GlcNAc...) asparagine glycan is attached at N64. In terms of domain architecture, Peptidase A1 spans 79–392 (YYGEISIGTP…DRQNNRIGFA (314 aa)). Residue D97 is part of the active site. 2 cysteine pairs are disulfide-bonded: C110–C117 and C274–C278. D283 is a catalytic residue. The cysteines at positions 316 and 351 are disulfide-linked.

Belongs to the peptidase A1 family. Post-translationally, N-glycosylated. As to expression, expressed by the venom gland (at protein level).

The protein resides in the secreted. It catalyses the reaction Cleavage of Leu-|-Xaa bond in angiotensinogen to generate angiotensin I.. Its activity is regulated as follows. Inhibited completely by aspartyl protease inhibitor pepstatin A, but not by the serine- or metalloproteinase inhibitors PMSF or EDTA. Functionally, renin is a highly specific endopeptidase, whose only known function is to generate angiotensin I from angiotensinogen in the plasma, initiating a cascade of reactions that produce an elevation of blood pressure and increased sodium retention by the kidney. This protein is also found in snake venom and shown to specifically cleave human and porcine angiotensinogen into angiotensin I. It does not have general protease activity, no cleavage of alpha or beta casein. May be directly responsible for elevation of blood pressure in the victims of envenomation. This Echis ocellatus (Ocellated saw-scaled viper) protein is Renin.